Consider the following 167-residue polypeptide: Leptin (167 aa).

The N-terminal stretch at 1–21 (MRCGPLCRFLWLWPYLSYIEA) is a signal peptide. Residues Cys117 and Cys167 are joined by a disulfide bond.

The protein belongs to the leptin family.

Its subcellular location is the secreted. Its function is as follows. Key player in the regulation of energy balance and body weight control. Once released into the circulation, has central and peripheral effects by binding LEPR, found in many tissues, which results in the activation of several major signaling pathways. In the hypothalamus, acts as an appetite-regulating factor that induces a decrease in food intake and an increase in energy consumption by inducing anorexinogenic factors and suppressing orexigenic neuropeptides, also regulates bone mass and secretion of hypothalamo-pituitary-adrenal hormones. In the periphery, increases basal metabolism, influences reproductive function, regulates pancreatic beta-cell function and insulin secretion, is pro-angiogenic for endothelial cell and affects innate and adaptive immunity. In the arcuate nucleus of the hypothalamus, activates by depolarization POMC neurons inducing FOS and SOCS3 expression to release anorexigenic peptides and inhibits by hyperpolarization NPY neurons inducing SOCS3 with a consequent reduction on release of orexigenic peptides. In addition to its known satiety inducing effect, has a modulatory role in nutrient absorption. In the intestine, reduces glucose absorption by enterocytes by activating PKC and leading to a sequential activation of p38, PI3K and ERK signaling pathways which exerts an inhibitory effect on glucose absorption. Acts as a growth factor on certain tissues, through the activation of different signaling pathways increases expression of genes involved in cell cycle regulation such as CCND1, via JAK2-STAT3 pathway, or VEGFA, via MAPK1/3 and PI3K-AKT1 pathways. May also play an apoptotic role via JAK2-STAT3 pathway and up-regulation of BIRC5 expression. Pro-angiogenic, has mitogenic activity on vascular endothelial cells and plays a role in matrix remodeling by regulating the expression of matrix metalloproteinases (MMPs) and tissue inhibitors of metalloproteinases (TIMPs). In innate immunity, modulates the activity and function of neutrophils by increasing chemotaxis and the secretion of oxygen radicals. Increases phagocytosis by macrophages and enhances secretion of pro-inflammatory mediators. Increases cytotoxic ability of NK cells. Plays a pro-inflammatory role, in synergy with IL1B, by inducing NOS2 which promotes the production of IL6, IL8 and Prostaglandin E2, through a signaling pathway that involves JAK2, PI3K, MAP2K1/MEK1 and MAPK14/p38. In adaptive immunity, promotes the switch of memory T-cells towards T helper-1 cell immune responses. Increases CD4(+)CD25(-) T-cell proliferation and reduces autophagy during TCR (T-cell receptor) stimulation, through MTOR signaling pathway activation and BCL2 up-regulation. The sequence is that of Leptin (LEP) from Ursus thibetanus (Asiatic black bear).